Reading from the N-terminus, the 66-residue chain is Large ribosomal subunit protein bL35 (66 aa).

The protein belongs to the bacterial ribosomal protein bL35 family.

The sequence is that of Large ribosomal subunit protein bL35 from Cereibacter sphaeroides (strain ATCC 17029 / ATH 2.4.9) (Rhodobacter sphaeroides).